The chain runs to 587 residues: MSNLMDKHTQKIDPQSLQHMLSVLRLEQLGDLKLTNVSLLDLINGEVIPGPILIDKGHIIAVGQEVDLLAAVRVVDCHGQIAVPGFIDAHMHVESSTMTPFEFERTTLPLGTTSIVCDPHELVNVMGRQGIDWFLRCSETMHQNMFVQISSCVPAVAGLDINGSDFSLDEMAAYREHKHVLGLAEVMDYPAVINGEQAMQDKLTTFNNLNLDGHSPLLSGLSLSAYVACGIQNCHETTNVEEGKEKLAKGMAVIMREGSVAKNLDALAPLITDFSSPYCLLCTDDRNPHEIANEGHINFMVKRLIQQHDIPAYLAYRVASWSAAKHFGLRRLGLIAPGYRADINLVSTLDAVDIQRVLIAGEFVDELTLESELEAKLEASSPPLHNTVKHRPITEAELTIPLKEGEYRVIGVVKDELLTNHLVCHFDGQHFAEPGVNKLAVIERYGHQLPPALSLVKGFDIEQGAIATSVGHDSHNIVVIGADEKSMAHAVNHLLEIGGGFCVVQQGEVTADLMLPLGGIMSLERSEKIAEQISDLKTAVKAIGVSLSEPFVQMSFLSLPVIPSLKMTVKGLFDVDQFKFVSLRVDS.

The protein belongs to the metallo-dependent hydrolases superfamily. Adenine deaminase family. Mn(2+) serves as cofactor.

The enzyme catalyses adenine + H2O + H(+) = hypoxanthine + NH4(+). The protein is Adenine deaminase of Shewanella halifaxensis (strain HAW-EB4).